The primary structure comprises 127 residues: Large ribosomal subunit protein bL17 (127 aa).

It belongs to the bacterial ribosomal protein bL17 family. Part of the 50S ribosomal subunit. Contacts protein L32.

The protein is Large ribosomal subunit protein bL17 of Pediococcus pentosaceus (strain ATCC 25745 / CCUG 21536 / LMG 10740 / 183-1w).